Consider the following 431-residue polypeptide: Glutamate-1-semialdehyde 2,1-aminomutase (431 aa).

The residue at position 269 (K269) is an N6-(pyridoxal phosphate)lysine.

This sequence belongs to the class-III pyridoxal-phosphate-dependent aminotransferase family. HemL subfamily. As to quaternary structure, homodimer. Requires pyridoxal 5'-phosphate as cofactor.

The protein resides in the cytoplasm. The catalysed reaction is (S)-4-amino-5-oxopentanoate = 5-aminolevulinate. It functions in the pathway porphyrin-containing compound metabolism; protoporphyrin-IX biosynthesis; 5-aminolevulinate from L-glutamyl-tRNA(Glu): step 2/2. The protein operates within porphyrin-containing compound metabolism; chlorophyll biosynthesis. The polypeptide is Glutamate-1-semialdehyde 2,1-aminomutase (Pelodictyon phaeoclathratiforme (strain DSM 5477 / BU-1)).